The following is a 143-amino-acid chain: Peptide methionine sulfoxide reductase MsrB (143 aa).

One can recognise a MsrB domain in the interval 16-139 (DAELRRRLTP…NSAALNFESR (124 aa)). Cys-55, Cys-58, Cys-104, and Cys-107 together coordinate Zn(2+). Residue Cys-128 is the Nucleophile of the active site.

Belongs to the MsrB Met sulfoxide reductase family. Requires Zn(2+) as cofactor.

It catalyses the reaction L-methionyl-[protein] + [thioredoxin]-disulfide + H2O = L-methionyl-(R)-S-oxide-[protein] + [thioredoxin]-dithiol. The polypeptide is Peptide methionine sulfoxide reductase MsrB (Burkholderia vietnamiensis (strain G4 / LMG 22486) (Burkholderia cepacia (strain R1808))).